Consider the following 864-residue polypeptide: Mitochondrial 15S rRNA processing factor CCM1 (864 aa).

Residues 1–76 constitute a mitochondrion transit peptide; it reads MYMARCGPKN…REFSNTLKER (76 aa). Composition is skewed to polar residues over residues 80–94 and 102–112; these read TKSVNSDGHQSNSIA and NVNVTKTSSVP. The tract at residues 80–117 is disordered; that stretch reads TKSVNSDGHQSNSIAPISEDSRNVNVTKTSSVPNEEKS. 2 PPR repeats span residues 319–353 and 356–390; these read NKQNLTTVIQFYSRKEMTKQAWNTFDTMKFLSTKH and DICTYNTMLRICEKERNFPKALDLFQEIQDHNIKP.

This sequence belongs to the CCM1 family. In terms of assembly, binds to mitochondrial small subunit 15S rRNA.

It localises to the mitochondrion. In terms of biological role, regulates mitochondrial small subunit maturation by controlling 15S rRNA 5'-end processing. Localizes to the 5' precursor of the 15S rRNA in a position that is subsequently occupied by mS47 in the mature yeast mtSSU. Uses structure and sequence-specific RNA recognition, binding to a single-stranded region of the precursor and specifically recognizing bases -6 to -1. The exchange of Ccm1 for mS47 is coupled to the irreversible removal of precursor rRNA that is accompanied by conformational changes of the mitoribosomal proteins uS5m and mS26. These conformational changes signal completion of 5'-end rRNA processing through protection of the mature 5'-end of the 15S rRNA and stabilization of mS47. The removal of the 5' precursor together with the dissociation of Ccm1 may be catalyzed by the 5'-3' exoribonuclease Pet127. Involved in the specific removal of group I introns in mitochondrial encoded transcripts. The protein is Mitochondrial 15S rRNA processing factor CCM1 of Saccharomyces cerevisiae (strain ATCC 204508 / S288c) (Baker's yeast).